A 64-amino-acid polypeptide reads, in one-letter code: Large ribosomal subunit protein bL33c (64 aa).

Belongs to the bacterial ribosomal protein bL33 family.

Its subcellular location is the plastid. The protein localises to the chloroplast. The polypeptide is Large ribosomal subunit protein bL33c (Thalassiosira pseudonana (Marine diatom)).